The following is a 106-amino-acid chain: UPF0145 protein CPF_0876 (106 aa).

The protein belongs to the UPF0145 family.

The chain is UPF0145 protein CPF_0876 from Clostridium perfringens (strain ATCC 13124 / DSM 756 / JCM 1290 / NCIMB 6125 / NCTC 8237 / Type A).